A 387-amino-acid chain; its full sequence is Large ribosomal subunit protein uL3 (387 aa).

It belongs to the universal ribosomal protein uL3 family.

The protein localises to the cytoplasm. This chain is Large ribosomal subunit protein uL3 (RPL3), found in Kluyveromyces lactis (strain ATCC 8585 / CBS 2359 / DSM 70799 / NBRC 1267 / NRRL Y-1140 / WM37) (Yeast).